The chain runs to 396 residues: Argininosuccinate synthase (396 aa).

An ATP-binding site is contributed by 9–17 (AFSGGLDTT). Tyr-86 serves as a coordination point for L-citrulline. Gly-116 is a binding site for ATP. L-aspartate contacts are provided by Thr-118, Asn-122, and Asp-123. Residue Asn-122 participates in L-citrulline binding. L-citrulline-binding residues include Arg-126, Ser-172, Ser-181, Glu-254, and Tyr-266.

It belongs to the argininosuccinate synthase family. Type 1 subfamily. As to quaternary structure, homotetramer.

It is found in the cytoplasm. The catalysed reaction is L-citrulline + L-aspartate + ATP = 2-(N(omega)-L-arginino)succinate + AMP + diphosphate + H(+). It participates in amino-acid biosynthesis; L-arginine biosynthesis; L-arginine from L-ornithine and carbamoyl phosphate: step 2/3. The sequence is that of Argininosuccinate synthase from Halobacterium salinarum (strain ATCC 700922 / JCM 11081 / NRC-1) (Halobacterium halobium).